Here is a 361-residue protein sequence, read N- to C-terminus: Histidinol-phosphate aminotransferase (361 aa).

At K216 the chain carries N6-(pyridoxal phosphate)lysine.

Belongs to the class-II pyridoxal-phosphate-dependent aminotransferase family. Histidinol-phosphate aminotransferase subfamily. As to quaternary structure, homodimer. The cofactor is pyridoxal 5'-phosphate.

The enzyme catalyses L-histidinol phosphate + 2-oxoglutarate = 3-(imidazol-4-yl)-2-oxopropyl phosphate + L-glutamate. It participates in amino-acid biosynthesis; L-histidine biosynthesis; L-histidine from 5-phospho-alpha-D-ribose 1-diphosphate: step 7/9. The polypeptide is Histidinol-phosphate aminotransferase (Francisella philomiragia subsp. philomiragia (strain ATCC 25017 / CCUG 19701 / FSC 153 / O#319-036)).